Consider the following 78-residue polypeptide: MDVMQRYVSPVNPAVFPHLATVLLVIGTFFTAWFFIFVVSRKSSKESTLIKELLISLCASIFLGFGIVFLLLTVGIYV.

Residues 1–18 (MDVMQRYVSPVNPAVFPH) lie on the Cytoplasmic side of the membrane. A helical transmembrane segment spans residues 19 to 39 (LATVLLVIGTFFTAWFFIFVV). The Cytoplasmic portion of the chain corresponds to 40–53 (SRKSSKESTLIKEL). Residues 54 to 74 (LISLCASIFLGFGIVFLLLTV) form a helical membrane-spanning segment. Topologically, residues 75 to 78 (GIYV) are perinuclear space.

It belongs to the OST5 family. In terms of assembly, homodimer. Component of the oligosaccharyltransferase (OST) complex. Interacts with klar and Msp300, components of LINC complex.

Its subcellular location is the nucleus outer membrane. It localises to the cytoplasm. The protein localises to the endoplasmic reticulum membrane. Functionally, subunit of the oligosaccharyl transferase (OST) complex that catalyzes the initial transfer of a defined glycan (Glc(3)Man(9)GlcNAc(2) in eukaryotes) from the lipid carrier dolichol-pyrophosphate to an asparagine residue within an Asn-X-Ser/Thr consensus motif in nascent polypeptide chains, the first step in protein N-glycosylation. N-glycosylation occurs cotranslationally and the complex associates with the Sec61 complex at the channel-forming translocon complex that mediates protein translocation across the endoplasmic reticulum (ER). All subunits are required for a maximal enzyme activity. In addition may regulates nuclear envelope (NE) architecture and nuclear positioning through the linker of nucleoskeleton and cytoskeleton (LINC)-dependent and -independent mechanisms. In Drosophila melanogaster (Fruit fly), this protein is Transmembrane protein 258.